The sequence spans 693 residues: Elongation factor G (693 aa).

One can recognise a tr-type G domain in the interval 8–282 (EKTRNIGIMA…AVIDYLPSPL (275 aa)). GTP-binding positions include 17–24 (AHVDAGKT), 81–85 (DTPGH), and 135–138 (NKMD).

Belongs to the TRAFAC class translation factor GTPase superfamily. Classic translation factor GTPase family. EF-G/EF-2 subfamily.

The protein localises to the cytoplasm. Its function is as follows. Catalyzes the GTP-dependent ribosomal translocation step during translation elongation. During this step, the ribosome changes from the pre-translocational (PRE) to the post-translocational (POST) state as the newly formed A-site-bound peptidyl-tRNA and P-site-bound deacylated tRNA move to the P and E sites, respectively. Catalyzes the coordinated movement of the two tRNA molecules, the mRNA and conformational changes in the ribosome. In Streptococcus pneumoniae (strain ATCC 700669 / Spain 23F-1), this protein is Elongation factor G.